A 232-amino-acid chain; its full sequence is Probable dihydroorotate dehydrogenase B (NAD(+)), electron transfer subunit (232 aa).

Residues 1–86 (MYYTRITQIE…RGAFGSAFTP (86 aa)) form the FAD-binding FR-type domain. 4 residues coordinate [2Fe-2S] cluster: C202, C207, C210, and C219.

The protein belongs to the PyrK family. Heterotetramer of 2 PyrK and 2 PyrD type B subunits. It depends on [2Fe-2S] cluster as a cofactor. FAD serves as cofactor.

It functions in the pathway pyrimidine metabolism; UMP biosynthesis via de novo pathway; orotate from (S)-dihydroorotate (NAD(+) route): step 1/1. Functionally, responsible for channeling the electrons from the oxidation of dihydroorotate from the FMN redox center in the PyrD type B subunit to the ultimate electron acceptor NAD(+). This chain is Probable dihydroorotate dehydrogenase B (NAD(+)), electron transfer subunit, found in Archaeoglobus fulgidus (strain ATCC 49558 / DSM 4304 / JCM 9628 / NBRC 100126 / VC-16).